The chain runs to 676 residues: Heat shock cognate HSP70 protein (676 aa).

The interval 613–676 is disordered; that stretch reads SARREGKDGW…RIEAINANTE (64 aa). A compositionally biased stretch (acidic residues) spans 630 to 646; it reads GSGDDNDGDDNSDEEDE.

The protein belongs to the heat shock protein 70 family.

The sequence is that of Heat shock cognate HSP70 protein from Trypanosoma brucei brucei.